A 1146-amino-acid polypeptide reads, in one-letter code: Transcription-repair-coupling factor (1146 aa).

The Helicase ATP-binding domain occupies 617–778 (DMCQPKAMDR…MNGIRDLSII (162 aa)). 630–637 (GDVGFGKT) lines the ATP pocket. Residues 731–734 (DEEH) carry the DEEH box motif. The Helicase C-terminal domain maps to 800-953 (VREAILREIL…GFILATHDLE (154 aa)).

This sequence in the N-terminal section; belongs to the UvrB family. The protein in the C-terminal section; belongs to the helicase family. RecG subfamily.

Its subcellular location is the cytoplasm. In terms of biological role, couples transcription and DNA repair by recognizing RNA polymerase (RNAP) stalled at DNA lesions. Mediates ATP-dependent release of RNAP and its truncated transcript from the DNA, and recruitment of nucleotide excision repair machinery to the damaged site. The polypeptide is Transcription-repair-coupling factor (Haemophilus influenzae (strain ATCC 51907 / DSM 11121 / KW20 / Rd)).